The chain runs to 40 residues: MITDMQLAIFSNVLGVFLFLLVVAYHYINANTGKPSAKAK.

Residues 1–7 (MITDMQL) lie on the Lumenal side of the membrane. A helical transmembrane segment spans residues 8–28 (AIFSNVLGVFLFLLVVAYHYI). The Cytoplasmic portion of the chain corresponds to 29-40 (NANTGKPSAKAK).

This sequence belongs to the OST4 family. As to quaternary structure, component of the oligosaccharyltransferase (OST) complex.

The protein localises to the endoplasmic reticulum membrane. Its function is as follows. Subunit of the oligosaccharyl transferase (OST) complex that catalyzes the initial transfer of a defined glycan (Glc(3)Man(9)GlcNAc(2) in eukaryotes) from the lipid carrier dolichol-pyrophosphate to an asparagine residue within an Asn-X-Ser/Thr consensus motif in nascent polypeptide chains, the first step in protein N-glycosylation. N-glycosylation occurs cotranslationally and the complex associates with the Sec61 complex at the channel-forming translocon complex that mediates protein translocation across the endoplasmic reticulum (ER). All subunits are required for a maximal enzyme activity. In Drosophila sechellia (Fruit fly), this protein is Dolichyl-diphosphooligosaccharide--protein glycosyltransferase subunit 4.